We begin with the raw amino-acid sequence, 497 residues long: Serine hydroxymethyltransferase (497 aa).

(6S)-5,6,7,8-tetrahydrofolate is bound by residues L176 and 180–182 (GHL). The residue at position 289 (K289) is an N6-(pyridoxal phosphate)lysine.

Belongs to the SHMT family. As to quaternary structure, homodimer. It depends on pyridoxal 5'-phosphate as a cofactor.

The protein resides in the cytoplasm. The enzyme catalyses (6R)-5,10-methylene-5,6,7,8-tetrahydrofolate + glycine + H2O = (6S)-5,6,7,8-tetrahydrofolate + L-serine. It functions in the pathway one-carbon metabolism; tetrahydrofolate interconversion. Its pathway is amino-acid biosynthesis; glycine biosynthesis; glycine from L-serine: step 1/1. Its function is as follows. Catalyzes the reversible interconversion of serine and glycine with tetrahydrofolate (THF) serving as the one-carbon carrier. This reaction serves as the major source of one-carbon groups required for the biosynthesis of purines, thymidylate, methionine, and other important biomolecules. Also exhibits THF-independent aldolase activity toward beta-hydroxyamino acids, producing glycine and aldehydes, via a retro-aldol mechanism. This Chlamydia caviae (strain ATCC VR-813 / DSM 19441 / 03DC25 / GPIC) (Chlamydophila caviae) protein is Serine hydroxymethyltransferase.